Reading from the N-terminus, the 298-residue chain is Lipoyl synthase (298 aa).

7 residues coordinate [4Fe-4S] cluster: cysteine 40, cysteine 45, cysteine 51, cysteine 67, cysteine 71, cysteine 74, and serine 280. The Radical SAM core domain occupies 53–269; it reads AVRKTATFMI…KEIALSKGFS (217 aa).

Belongs to the radical SAM superfamily. Lipoyl synthase family. [4Fe-4S] cluster serves as cofactor.

It is found in the cytoplasm. The catalysed reaction is [[Fe-S] cluster scaffold protein carrying a second [4Fe-4S](2+) cluster] + N(6)-octanoyl-L-lysyl-[protein] + 2 oxidized [2Fe-2S]-[ferredoxin] + 2 S-adenosyl-L-methionine + 4 H(+) = [[Fe-S] cluster scaffold protein] + N(6)-[(R)-dihydrolipoyl]-L-lysyl-[protein] + 4 Fe(3+) + 2 hydrogen sulfide + 2 5'-deoxyadenosine + 2 L-methionine + 2 reduced [2Fe-2S]-[ferredoxin]. Its pathway is protein modification; protein lipoylation via endogenous pathway; protein N(6)-(lipoyl)lysine from octanoyl-[acyl-carrier-protein]. Functionally, catalyzes the radical-mediated insertion of two sulfur atoms into the C-6 and C-8 positions of the octanoyl moiety bound to the lipoyl domains of lipoate-dependent enzymes, thereby converting the octanoylated domains into lipoylated derivatives. In Bacillus cereus (strain ATCC 10987 / NRS 248), this protein is Lipoyl synthase.